The chain runs to 130 residues: Small ribosomal subunit protein uS8 (130 aa).

This sequence belongs to the universal ribosomal protein uS8 family. In terms of assembly, part of the 30S ribosomal subunit.

One of the primary rRNA binding proteins, it binds directly to 16S rRNA central domain where it helps coordinate assembly of the platform of the 30S subunit. This is Small ribosomal subunit protein uS8 from Methanosarcina barkeri (strain Fusaro / DSM 804).